The following is a 1298-amino-acid chain: DNA-directed RNA polymerase subunit beta' (1298 aa).

Zn(2+)-binding residues include cysteine 60, cysteine 62, cysteine 75, and cysteine 78. The Mg(2+) site is built by aspartate 535, aspartate 537, and aspartate 539. Cysteine 877, cysteine 954, cysteine 961, and cysteine 964 together coordinate Zn(2+).

It belongs to the RNA polymerase beta' chain family. As to quaternary structure, the RNAP catalytic core consists of 2 alpha, 1 beta, 1 beta' and 1 omega subunit. When a sigma factor is associated with the core the holoenzyme is formed, which can initiate transcription. Mg(2+) serves as cofactor. The cofactor is Zn(2+).

The catalysed reaction is RNA(n) + a ribonucleoside 5'-triphosphate = RNA(n+1) + diphosphate. Its function is as follows. DNA-dependent RNA polymerase catalyzes the transcription of DNA into RNA using the four ribonucleoside triphosphates as substrates. The protein is DNA-directed RNA polymerase subunit beta' of Micrococcus luteus (strain ATCC 4698 / DSM 20030 / JCM 1464 / CCM 169 / CCUG 5858 / IAM 1056 / NBRC 3333 / NCIMB 9278 / NCTC 2665 / VKM Ac-2230) (Micrococcus lysodeikticus).